A 685-amino-acid polypeptide reads, in one-letter code: Sodium-dependent phosphate transporter 1-B (685 aa).

A run of 6 helical transmembrane segments spans residues 21–41 (IMAP…VLAF), 66–86 (ACIL…AKVS), 106–126 (LMAG…AASF), 162–182 (IVLS…LLFF), 207–227 (ACTI…LLGF), and 234–254 (GIIL…WFFV). The disordered stretch occupies residues 489–511 (EGCIEDVVTDRKSSSSSLEERHD). The segment covering 496–511 (VTDRKSSSSSLEERHD) has biased composition (basic and acidic residues). 4 helical membrane-spanning segments follow: residues 517–537 (VSLL…FAHG), 565–585 (ATPI…LWVW), 606–626 (FSIE…GLPI), and 656–676 (IFLA…GIMA).

Belongs to the inorganic phosphate transporter (PiT) (TC 2.A.20) family.

Its subcellular location is the membrane. Sodium-phosphate symporter which plays a fundamental housekeeping role in phosphate transport. The sequence is that of Sodium-dependent phosphate transporter 1-B (slc20a1-b) from Xenopus laevis (African clawed frog).